The chain runs to 548 residues: Solute carrier family 22 member 7 (548 aa).

A run of 12 helical transmembrane segments spans residues 21 to 41 (VALL…PIFL), 146 to 166 (AAST…GYLS), 180 to 200 (VSTL…MFAI), 204 to 224 (LTGS…LEWL), 234 to 254 (VLSS…GYLI), 259 to 279 (WLLL…WWVP), 346 to 366 (ISLC…GLSL), 376 to 397 (YQTQ…YLSV), 404 to 423 (LTQA…RLLV), 432 to 452 (TVLA…AYLF), 466 to 486 (MGLT…AALL), and 493 to 513 (LPKL…LLLP). The interval 522 to 548 (ETIQDVERKSAPTSLQEEEMPMKQVQN) is disordered.

The protein belongs to the major facilitator (TC 2.A.1) superfamily. Organic cation transporter (TC 2.A.1.19) family.

It localises to the basolateral cell membrane. The protein localises to the apical cell membrane. It is found in the cell membrane. It carries out the reaction orotate(out) + L-glutamate(in) = orotate(in) + L-glutamate(out). It catalyses the reaction 3',5'-cyclic GMP(in) = 3',5'-cyclic GMP(out). The enzyme catalyses GMP(in) = GMP(out). The catalysed reaction is 2'-deoxyguanosine(in) = 2'-deoxyguanosine(out). It carries out the reaction GDP(in) = GDP(out). It catalyses the reaction guanosine(in) = guanosine(out). The enzyme catalyses GTP(in) = GTP(out). The catalysed reaction is 3',5'-cyclic AMP(in) = 3',5'-cyclic AMP(out). It carries out the reaction creatinine(in) = creatinine(out). It catalyses the reaction prostaglandin E2(out) = prostaglandin E2(in). The enzyme catalyses 2-oxoglutarate(in) = 2-oxoglutarate(out). The catalysed reaction is glutarate(in) = glutarate(out). It carries out the reaction urate(out) = urate(in). It catalyses the reaction estrone 3-sulfate(out) = estrone 3-sulfate(in). In terms of biological role, functions as a Na(+)-independent bidirectional multispecific transporter. Contributes to the renal and hepatic elimination of endogenous organic compounds from the systemic circulation into the urine and bile, respectively. Capable of transporting a wide range of purine and pyrimidine nucleobases, nucleosides and nucleotides, with cGMP, 2'deoxyguanosine and GMP being the preferred substrates. Functions as a pH- and chloride-independent cGMP bidirectional facilitative transporter that can regulate both intracellular and extracellular levels of cGMP and may be involved in cGMP signaling pathways. Mediates orotate/glutamate bidirectional exchange and most likely display a physiological role in hepatic release of glutamate into the blood. Involved in renal secretion and possible reabsorption of creatinine. Able to uptake prostaglandin E2 (PGE2) and may contribute to PGE2 renal excretion. Also transports alpha-ketoglutarate and urate. Apart from the orotate/glutamate exchange, the counterions for the uptake of other SLC22A7/OAT2 substrates remain to be identified. The chain is Solute carrier family 22 member 7 (SLC22A7) from Pongo abelii (Sumatran orangutan).